A 1377-amino-acid chain; its full sequence is DNA-directed RNA polymerase subunit beta (1377 aa).

The protein belongs to the RNA polymerase beta chain family. The RNAP catalytic core consists of 2 alpha, 1 beta, 1 beta' and 1 omega subunit. When a sigma factor is associated with the core the holoenzyme is formed, which can initiate transcription.

It catalyses the reaction RNA(n) + a ribonucleoside 5'-triphosphate = RNA(n+1) + diphosphate. In terms of biological role, DNA-dependent RNA polymerase catalyzes the transcription of DNA into RNA using the four ribonucleoside triphosphates as substrates. The protein is DNA-directed RNA polymerase subunit beta of Brucella abortus (strain S19).